A 610-amino-acid polypeptide reads, in one-letter code: uncharacterized protein (610 aa).

Positions 1-28 (MDSPSTSESPLKKNTIQDFGESNMTESP) are enriched in polar residues. The interval 1–36 (MDSPSTSESPLKKNTIQDFGESNMTESPQSKEEIDE) is disordered. An RING-type zinc finger spans residues 41–82 (CSVCKNEIIDTTSLSDCCHEFCYDCIVGWLTKGSGPFCPMCK). Disordered regions lie at residues 390 to 411 (YRGQ…FRPA) and 431 to 515 (TSSA…SADR). A compositionally biased stretch (low complexity) spans 432–447 (SSAGAGSARSRGSDSV). Composition is skewed to acidic residues over residues 448-470 (VEID…EDSD) and 478-487 (SEEDSDEEIQ).

This is an uncharacterized protein from Caenorhabditis elegans.